The sequence spans 432 residues: Myb family transcription factor EFM (432 aa).

Residues 36–81 (LEDLLSRLEQERLKIDAFKRELPLCMQLLNNAVEVYKQQLEAYRAN) adopt a coiled-coil conformation. Composition is skewed to polar residues over residues 123–139 (SQSE…TDQS) and 187–197 (SPTNEHTNGQD). A disordered region spans residues 123–237 (SQSETKPKNI…SQSNRKARRC (115 aa)). Positions 201-231 (ESMINNDNNYNNNNNNNSNSNGVSSTTSQSN) are enriched in low complexity. An HTH myb-type domain is found at 230–290 (SNRKARRCWS…HLQKYRLHTR (61 aa)). A DNA-binding region (H-T-H motif) is located at residues 261–286 (PKQIRELMKVDGLTNDEVKSHLQKYR). Positions 354–412 (FYTTPPPPQPLHHHHFQTFNGSSGGTASTDSTHHQVTDSPTVEGKSPESGGGERKGLAA) are disordered.

As to quaternary structure, interacts with JMJ30, but not with SVP, FLC or CO. In terms of tissue distribution, specifically expressed in vascular tissues of cotyledons, rosette leaves and cauline leaves. Not detected in the vegetative shoot apical meristem.

The protein resides in the nucleus. Functionally, transcription factor acting as a flowering repressor, directly repressing FT expression in a dosage-dependent manner in the leaf vasculature. The polypeptide is Myb family transcription factor EFM (Arabidopsis thaliana (Mouse-ear cress)).